Here is a 454-residue protein sequence, read N- to C-terminus: tRNA modification GTPase MnmE (454 aa).

(6S)-5-formyl-5,6,7,8-tetrahydrofolate contacts are provided by Arg-23, Glu-80, and Lys-120. A TrmE-type G domain is found at 216-377 (GMKVVIAGRP…LREHLKQSMG (162 aa)). Residue Asn-226 participates in K(+) binding. GTP contacts are provided by residues 226–231 (NAGKSS), 245–251 (TDIAGTT), and 270–273 (DTAG). A Mg(2+)-binding site is contributed by Ser-230. Residues Thr-245, Ile-247, and Thr-250 each coordinate K(+). Thr-251 is a Mg(2+) binding site. Lys-454 provides a ligand contact to (6S)-5-formyl-5,6,7,8-tetrahydrofolate.

Belongs to the TRAFAC class TrmE-Era-EngA-EngB-Septin-like GTPase superfamily. TrmE GTPase family. In terms of assembly, homodimer. Heterotetramer of two MnmE and two MnmG subunits. The cofactor is K(+).

The protein resides in the cytoplasm. Functionally, exhibits a very high intrinsic GTPase hydrolysis rate. Involved in the addition of a carboxymethylaminomethyl (cmnm) group at the wobble position (U34) of certain tRNAs, forming tRNA-cmnm(5)s(2)U34. The protein is tRNA modification GTPase MnmE of Mannheimia succiniciproducens (strain KCTC 0769BP / MBEL55E).